The sequence spans 269 residues: Ribosomal RNA small subunit methyltransferase J (269 aa).

S-adenosyl-L-methionine-binding positions include 125-126 and Asp-179; that span reads ER.

Belongs to the methyltransferase superfamily. RsmJ family.

It localises to the cytoplasm. The catalysed reaction is guanosine(1516) in 16S rRNA + S-adenosyl-L-methionine = N(2)-methylguanosine(1516) in 16S rRNA + S-adenosyl-L-homocysteine + H(+). Functionally, specifically methylates the guanosine in position 1516 of 16S rRNA. In Pseudomonas syringae pv. tomato (strain ATCC BAA-871 / DC3000), this protein is Ribosomal RNA small subunit methyltransferase J.